The following is a 345-amino-acid chain: RNA polymerase II holoenzyme cyclin-like subunit (345 aa).

In terms of domain architecture, Cyclin N-terminal spans 53-144 (QQINRLGKRM…IGECEFYLIS (92 aa)). The segment at 256 to 285 (GLTPQSSSGLQAMLPPQSPAGEGPAEGNKN) is disordered.

Belongs to the cyclin family. Cyclin C subfamily. In terms of assembly, component of the srb8-11 complex, a regulatory module of the Mediator complex.

It localises to the nucleus. Its function is as follows. Component of the srb8-11 complex. The srb8-11 complex is a regulatory module of the Mediator complex which is itself involved in regulation of basal and activated RNA polymerase II-dependent transcription. The srb8-11 complex may be involved in the transcriptional repression of a subset of genes regulated by Mediator. It may inhibit the association of the Mediator complex with RNA polymerase II to form the holoenzyme complex. The srb8-11 complex phosphorylates the C-terminal domain (CTD) of the largest subunit of RNA polymerase II. The polypeptide is RNA polymerase II holoenzyme cyclin-like subunit (ssn8) (Neurospora crassa (strain ATCC 24698 / 74-OR23-1A / CBS 708.71 / DSM 1257 / FGSC 987)).